The following is a 252-amino-acid chain: Metalloprotease LoiP (252 aa).

The signal sequence occupies residues 1–18 (MKIRALLVAMSVATVLTG). The N-palmitoyl cysteine moiety is linked to residue cysteine 19. The S-diacylglycerol cysteine moiety is linked to residue cysteine 19. A disulfide bridge connects residues cysteine 53 and cysteine 108. Histidine 130 lines the Zn(2+) pocket. Residue glutamate 131 is part of the active site. Residues histidine 134 and glutamate 189 each coordinate Zn(2+). The tract at residues 224–252 (RQSSMFDDHPASAERAQHIRDRMSADGIK) is disordered.

It belongs to the peptidase M48B family. As to quaternary structure, interacts with Era and BepA. Zn(2+) serves as cofactor. In terms of processing, the intramolecular disulfide bond improves the stability and the activity of LoiP. It forms even in the absence of the oxido-reductase DsbA.

The protein resides in the cell outer membrane. Its function is as follows. Metalloprotease that cleaves substrates preferentially between Phe-Phe residues. Plays a role in response to some stress conditions. Seems to regulate the expression of speB. This is Metalloprotease LoiP (loiP) from Escherichia coli (strain K12).